A 600-amino-acid polypeptide reads, in one-letter code: Glutamine--fructose-6-phosphate aminotransferase [isomerizing] (600 aa).

Cys-2 functions as the Nucleophile; for GATase activity in the catalytic mechanism. One can recognise a Glutamine amidotransferase type-2 domain in the interval 2 to 217 (CGIVGYIGYQ…DGELVIVTSE (216 aa)). SIS domains follow at residues 283–422 (IINE…AKGF) and 452–590 (IASD…VDKP). The active-site For Fru-6P isomerization activity is the Lys-595.

Homodimer.

Its subcellular location is the cytoplasm. The enzyme catalyses D-fructose 6-phosphate + L-glutamine = D-glucosamine 6-phosphate + L-glutamate. In terms of biological role, catalyzes the first step in hexosamine metabolism, converting fructose-6P into glucosamine-6P using glutamine as a nitrogen source. The protein is Glutamine--fructose-6-phosphate aminotransferase [isomerizing] of Geobacillus kaustophilus (strain HTA426).